The sequence spans 128 residues: Ribonuclease pancreatic (128 aa).

Over residues 1 to 13 (KESPAMKFERQHM) the composition is skewed to basic and acidic residues. Residues 1–26 (KESPAMKFERQHMDSGSTSSSNPTYC) are disordered. Lys-7 and Arg-10 together coordinate substrate. Residue His-12 is the Proton acceptor of the active site. The span at 14–26 (DSGSTSSSNPTYC) shows a compositional bias: polar residues. 4 disulfide bridges follow: Cys-26/Cys-84, Cys-40/Cys-95, Cys-58/Cys-110, and Cys-65/Cys-72. The N-linked (GlcNAc...) asparagine glycan is linked to Asn-34. Position 41-45 (41-45 (KPVNT)) interacts with substrate. Asn-62 carries N-linked (GlcNAc...) asparagine glycosylation. Residues Lys-66 and Arg-85 each contribute to the substrate site. The active-site Proton donor is His-119.

This sequence belongs to the pancreatic ribonuclease family. In terms of assembly, monomer. Interacts with and forms tight 1:1 complexes with RNH1. Dimerization of two such complexes may occur. Interaction with RNH1 inhibits this protein. As to expression, pancreas.

The protein resides in the secreted. It carries out the reaction an [RNA] containing cytidine + H2O = an [RNA]-3'-cytidine-3'-phosphate + a 5'-hydroxy-ribonucleotide-3'-[RNA].. It catalyses the reaction an [RNA] containing uridine + H2O = an [RNA]-3'-uridine-3'-phosphate + a 5'-hydroxy-ribonucleotide-3'-[RNA].. Its function is as follows. Endonuclease that catalyzes the cleavage of RNA on the 3' side of pyrimidine nucleotides. Acts on single-stranded and double-stranded RNA. The sequence is that of Ribonuclease pancreatic (RNASE1) from Equus caballus (Horse).